The chain runs to 206 residues: High frequency lysogenization protein HflD homolog (206 aa).

This sequence belongs to the HflD family.

Its subcellular location is the cytoplasm. The protein localises to the cell inner membrane. In Ectopseudomonas mendocina (strain ymp) (Pseudomonas mendocina), this protein is High frequency lysogenization protein HflD homolog.